We begin with the raw amino-acid sequence, 90 residues long: RNA-binding protein Hfq (90 aa).

One can recognise a Sm domain in the interval 9 to 68 (DPFLNALRRERVPVSIYLVNGIKLQGQVESFDQFVILLKNTVSQMVYKHAISTVVPARPF).

This sequence belongs to the Hfq family. Homohexamer.

Functionally, RNA chaperone that binds small regulatory RNA (sRNAs) and mRNAs to facilitate mRNA translational regulation in response to envelope stress, environmental stress and changes in metabolite concentrations. Also binds with high specificity to tRNAs. The sequence is that of RNA-binding protein Hfq from Shewanella oneidensis (strain ATCC 700550 / JCM 31522 / CIP 106686 / LMG 19005 / NCIMB 14063 / MR-1).